The sequence spans 200 residues: Transcription factor FapR (200 aa).

Belongs to the FapR family.

Transcriptional factor involved in regulation of membrane lipid biosynthesis by repressing genes involved in fatty acid and phospholipid metabolism. The protein is Transcription factor FapR of Caldanaerobacter subterraneus subsp. tengcongensis (strain DSM 15242 / JCM 11007 / NBRC 100824 / MB4) (Thermoanaerobacter tengcongensis).